The sequence spans 619 residues: N-acetylmuramoyl-L-alanine amidase domain-containing protein SAOUHSC_02979 (619 aa).

Residues 1–27 (MPKNKILIYLLSTTLVLPTLVSPTAYA) form the signal peptide. Disordered stretches follow at residues 25–83 (AYAD…TIDD), 134–226 (SDYE…SMSD), and 238–290 (EDAK…NQKD). 3 stretches are compositionally biased toward basic and acidic residues: residues 30 to 65 (PQKD…KADK), 73 to 82 (NNDKKFKTID), and 137 to 146 (EQPRNGEKST). A compositionally biased stretch (low complexity) spans 147 to 156 (NDSNKNSDNS). Positions 157-175 (IKNDTDTQSSKQDKADNQK) are enriched in basic and acidic residues. A compositionally biased stretch (polar residues) spans 176 to 192 (APKSNNTKPSTSNKQPN). Low complexity predominate over residues 214–226 (QKSSSKDNQSMSD). Basic and acidic residues predominate over residues 238-260 (EDAKKTQKDYASQSKKDKNEKSN). The N-acetylmuramoyl-L-alanine amidase stretch occupies residues 327-468 (IAKDAHRIGQ…LNSIIKHYQL (142 aa)). Residues 488–617 (DYDDSSDEFK…AAAEELSYIT (130 aa)) enclose the Peptidase C51 domain.

In the N-terminal section; belongs to the N-acetylmuramoyl-L-alanine amidase 2 family.

Its subcellular location is the secreted. The chain is N-acetylmuramoyl-L-alanine amidase domain-containing protein SAOUHSC_02979 from Staphylococcus aureus (strain NCTC 8325 / PS 47).